A 110-amino-acid polypeptide reads, in one-letter code: UPF0060 membrane protein PBPRB0495 (110 aa).

The next 4 helical transmembrane spans lie at 7 to 27 (VGLF…PYLW), 33 to 53 (TIWL…LLTL), 63 to 83 (AAYG…VDGI), and 85 to 105 (PTVW…IIMF).

It belongs to the UPF0060 family.

Its subcellular location is the cell inner membrane. The protein is UPF0060 membrane protein PBPRB0495 of Photobacterium profundum (strain SS9).